The primary structure comprises 436 residues: Histidine--tRNA ligase (436 aa).

The protein belongs to the class-II aminoacyl-tRNA synthetase family. As to quaternary structure, homodimer.

It is found in the cytoplasm. It carries out the reaction tRNA(His) + L-histidine + ATP = L-histidyl-tRNA(His) + AMP + diphosphate + H(+). This is Histidine--tRNA ligase from Prochlorococcus marinus (strain MIT 9313).